Consider the following 242-residue polypeptide: Venom redulysin 2 (242 aa).

An N-terminal signal peptide occupies residues M1 to G19. A propeptide spanning residues F20–R46 is cleaved from the precursor.

It belongs to the redulysin-like family. In terms of processing, contains 5 disulfide bonds. As to expression, expressed by the venom gland (posterior main gland) (at protein level).

The protein localises to the secreted. Highly abundant protein that may be responsible for the observed disruption of sensory neuron membranes, since it is homologous to proteins such as trialysin, which forms pores in lipid bilayers. Probable insecticidal toxin. The sequence is that of Venom redulysin 2 from Platymeris rhadamanthus (Red spot assassin bug).